Consider the following 178-residue polypeptide: Bifunctional protein PyrR (178 aa).

Positions 99 to 111 (VILVDDVLFTGRT) match the PRPP-binding motif.

Belongs to the purine/pyrimidine phosphoribosyltransferase family. PyrR subfamily. Homodimer and homohexamer; in equilibrium.

The catalysed reaction is UMP + diphosphate = 5-phospho-alpha-D-ribose 1-diphosphate + uracil. Regulates transcriptional attenuation of the pyrimidine nucleotide (pyr) operon by binding in a uridine-dependent manner to specific sites on pyr mRNA. This disrupts an antiterminator hairpin in the RNA and favors formation of a downstream transcription terminator, leading to a reduced expression of downstream genes. Its function is as follows. Also displays a weak uracil phosphoribosyltransferase activity which is not physiologically significant. The polypeptide is Bifunctional protein PyrR (Limosilactobacillus reuteri subsp. reuteri (strain JCM 1112) (Lactobacillus reuteri)).